A 95-amino-acid chain; its full sequence is DASH complex subunit DAD3 (95 aa).

It belongs to the DASH complex DAD3 family. Component of the DASH complex consisting of ASK1, DAD1, DAD2, DAD3, DAD4, DAM1, DUO1, HSK3, SPC19 and SPC34, with a stoichiometry of one copy of each subunit per complex. Multiple DASH complexes oligomerize to form a ring that encircles spindle microtubules and organizes the rod-like NDC80 complexes of the outer kinetochore. DASH complex oligomerization strengthens microtubule attachments. On cytoplasmic microtubules, DASH complexes appear to form patches instead of rings.

Its subcellular location is the chromosome. The protein localises to the centromere. It is found in the kinetochore. It localises to the cytoplasm. The protein resides in the cytoskeleton. Its subcellular location is the spindle. The protein localises to the nucleus. In terms of biological role, component of the DASH complex that connects microtubules with kinetochores and couples microtubule depolymerisation to chromosome movement; it is involved in retrieving kinetochores to the spindle poles before their re-orientation on the spindle in early mitosis and allows microtubule depolymerization to pull chromosomes apart and resist detachment during anaphase. Kinetochores, consisting of a centromere-associated inner segment and a microtubule-contacting outer segment, play a crucial role in chromosome segregation by mediating the physical connection between centromeric DNA and microtubules. Kinetochores also serve as an input point for the spindle assembly checkpoint, which delays anaphase until all chromosomes have bioriented on the mitotic spindle. The protein is DASH complex subunit DAD3 of Chaetomium thermophilum (strain DSM 1495 / CBS 144.50 / IMI 039719) (Thermochaetoides thermophila).